A 205-amino-acid polypeptide reads, in one-letter code: Pyrrolidone-carboxylate peptidase (205 aa).

Active-site residues include Glu-79, Cys-142, and His-165.

Belongs to the peptidase C15 family. In terms of assembly, homotetramer.

The protein localises to the cytoplasm. The enzyme catalyses Release of an N-terminal pyroglutamyl group from a polypeptide, the second amino acid generally not being Pro.. Removes 5-oxoproline from various penultimate amino acid residues except L-proline. This chain is Pyrrolidone-carboxylate peptidase, found in Gloeobacter violaceus (strain ATCC 29082 / PCC 7421).